Here is a 100-residue protein sequence, read N- to C-terminus: Acylphosphatase (100 aa).

In terms of domain architecture, Acylphosphatase-like spans 14–100 (RLSAWVHGHV…RGDLTGFEER (87 aa)). Catalysis depends on residues R29 and N47.

This sequence belongs to the acylphosphatase family.

It carries out the reaction an acyl phosphate + H2O = a carboxylate + phosphate + H(+). This chain is Acylphosphatase (acyP), found in Nocardia farcinica (strain IFM 10152).